A 576-amino-acid polypeptide reads, in one-letter code: Sulfite reductase [NADPH] hemoprotein beta-component (576 aa).

Over residues 1–12 (MNVKTEPDRSRD) the composition is skewed to basic and acidic residues. Residues 1 to 25 (MNVKTEPDRSRDVSQPLDKLGPDET) form a disordered region. Positions 441, 447, 486, and 490 each coordinate [4Fe-4S] cluster. Residue Cys-490 coordinates siroheme.

This sequence belongs to the nitrite and sulfite reductase 4Fe-4S domain family. As to quaternary structure, alpha(8)-beta(8). The alpha component is a flavoprotein, the beta component is a hemoprotein. It depends on siroheme as a cofactor. The cofactor is [4Fe-4S] cluster.

It carries out the reaction hydrogen sulfide + 3 NADP(+) + 3 H2O = sulfite + 3 NADPH + 4 H(+). Its pathway is sulfur metabolism; hydrogen sulfide biosynthesis; hydrogen sulfide from sulfite (NADPH route): step 1/1. Component of the sulfite reductase complex that catalyzes the 6-electron reduction of sulfite to sulfide. This is one of several activities required for the biosynthesis of L-cysteine from sulfate. The polypeptide is Sulfite reductase [NADPH] hemoprotein beta-component (Nitrobacter hamburgensis (strain DSM 10229 / NCIMB 13809 / X14)).